A 692-amino-acid polypeptide reads, in one-letter code: FMR1-interacting protein NUFIP2 (692 aa).

The interval Met1–Gly100 is disordered. Composition is skewed to basic residues over residues Gln11 to Pro23 and Ser31 to Gln54. Lys79 is covalently cross-linked (Glycyl lysine isopeptide (Lys-Gly) (interchain with G-Cter in SUMO2)). Thr88 bears the Phosphothreonine mark. Residue Lys110 forms a Glycyl lysine isopeptide (Lys-Gly) (interchain with G-Cter in SUMO2) linkage. Phosphoserine occurs at positions 113 and 114. Residues Lys137, Lys147, Lys158, and Lys172 each participate in a glycyl lysine isopeptide (Lys-Gly) (interchain with G-Cter in SUMO2) cross-link. The segment at Ser205–Lys233 is disordered. A phosphoserine mark is found at Ser213 and Ser215. Tyr219 carries the phosphotyrosine modification. 2 positions are modified to phosphothreonine: Thr220 and Thr221. Over residues Pro222 to Ser231 the composition is skewed to basic residues. Residues Lys262 and Lys281 each participate in a glycyl lysine isopeptide (Lys-Gly) (interchain with G-Cter in SUMO2) cross-link. Disordered regions lie at residues Lys277–Phe337 and Thr369–Pro401. Omega-N-methylarginine is present on Arg291. Lys293 participates in a covalent cross-link: Glycyl lysine isopeptide (Lys-Gly) (interchain with G-Cter in SUMO2). A Phosphoserine modification is found at Ser304. Lys307 is covalently cross-linked (Glycyl lysine isopeptide (Lys-Gly) (interchain with G-Cter in SUMO2)). The segment covering Gln371–Ser395 has biased composition (low complexity). Ser376 is modified (phosphoserine). Thr569 is subject to Phosphothreonine. Phosphoserine is present on residues Ser570, Ser589, Ser605, and Ser626. Thr630 is subject to Phosphothreonine. Residues Ser634, Ser649, Ser652, and Ser689 each carry the phosphoserine modification.

In terms of assembly, interacts with FMR1 (via N-terminus). Interacts with DDX6.

The protein localises to the nucleus. The protein resides in the cytoplasm. It is found in the stress granule. Binds RNA. This Mus musculus (Mouse) protein is FMR1-interacting protein NUFIP2 (Nufip2).